The sequence spans 245 residues: tRNA pseudouridine synthase A 2 (245 aa).

Aspartate 53 functions as the Nucleophile in the catalytic mechanism. Tyrosine 111 serves as a coordination point for substrate.

The protein belongs to the tRNA pseudouridine synthase TruA family. As to quaternary structure, homodimer.

The catalysed reaction is uridine(38/39/40) in tRNA = pseudouridine(38/39/40) in tRNA. Its function is as follows. Formation of pseudouridine at positions 38, 39 and 40 in the anticodon stem and loop of transfer RNAs. This is tRNA pseudouridine synthase A 2 from Bacillus cereus (strain ATCC 14579 / DSM 31 / CCUG 7414 / JCM 2152 / NBRC 15305 / NCIMB 9373 / NCTC 2599 / NRRL B-3711).